A 495-amino-acid polypeptide reads, in one-letter code: Serine/threonine protein phosphatase 2A 57 kDa regulatory subunit B' alpha isoform (495 aa).

Residues 1 to 13 (MFKKIMKGANRKA) show a composition bias toward basic residues. Disordered regions lie at residues 1 to 61 (MFKK…AATT) and 462 to 495 (QAKSKQVEEQRQNRWRRLDEAVEEREREDPMITS). The span at 49-61 (VPSSPNSMAAATT) shows a compositional bias: polar residues.

The protein belongs to the phosphatase 2A regulatory subunit B56 family. In terms of assembly, PP2A consists of a common heteromeric enzyme, composed of a catalytic subunit (subunits C), a constant regulatory subunit (subunit A), and a variety of regulatory subunits such as subunits B (the R2/B/PR55/B55, R3/B''/PR72/PR130/PR59 and R5/B'/B56 families). Interacts with BZR1. Interacts with BRI1. Interacts with SRK2E/OST1. As to expression, expressed ubiquitously, higher levels in leaves.

The protein resides in the nucleus. Its subcellular location is the cytoplasm. Its function is as follows. The B regulatory subunit may modulate substrate selectivity and catalytic activity, and may also direct the localization of the catalytic enzyme to a particular subcellular compartment. Required for the formation of the PP2A holoenzyme that positively regulates brassinosteroid signaling by dephosphorylating and activating BZR1. In Arabidopsis thaliana (Mouse-ear cress), this protein is Serine/threonine protein phosphatase 2A 57 kDa regulatory subunit B' alpha isoform (B'ALPHA).